A 97-amino-acid chain; its full sequence is Large ribosomal subunit protein uL23 (97 aa).

Belongs to the universal ribosomal protein uL23 family. In terms of assembly, part of the 50S ribosomal subunit. Contacts protein L29, and trigger factor when it is bound to the ribosome.

Its function is as follows. One of the early assembly proteins it binds 23S rRNA. One of the proteins that surrounds the polypeptide exit tunnel on the outside of the ribosome. Forms the main docking site for trigger factor binding to the ribosome. The chain is Large ribosomal subunit protein uL23 from Thermoanaerobacter pseudethanolicus (strain ATCC 33223 / 39E) (Clostridium thermohydrosulfuricum).